A 418-amino-acid chain; its full sequence is Nickel and cobalt resistance protein CnrC (418 aa).

The N-terminal stretch at 1–29 (MKQVISSFLCRPRFVGSAIWLLPVALSHA) is a signal peptide.

The protein belongs to the outer membrane factor (OMF) (TC 1.B.17) family.

In terms of biological role, the products of the genes cnrA, cnrB, and cnrC are likely to form a membrane-bound protein complex catalyzing an energy-dependent efflux of Ni(2+) and Co(2+). The mechanism of action of the CnrCBA complex may be that of a proton/cation antiporter. The polypeptide is Nickel and cobalt resistance protein CnrC (cnrC) (Cupriavidus metallidurans (strain ATCC 43123 / DSM 2839 / NBRC 102507 / CH34) (Ralstonia metallidurans)).